We begin with the raw amino-acid sequence, 576 residues long: Adenine deaminase (576 aa).

It belongs to the metallo-dependent hydrolases superfamily. Adenine deaminase family. Requires Mn(2+) as cofactor.

It carries out the reaction adenine + H2O + H(+) = hypoxanthine + NH4(+). The chain is Adenine deaminase from Syntrophobacter fumaroxidans (strain DSM 10017 / MPOB).